A 1178-amino-acid chain; its full sequence is F-box/WD repeat-containing protein A-like protein (1178 aa).

Residues 1 to 208 (MQYVNGMDIV…TLPNLIKYIK (208 aa)) form the START domain. Disordered stretches follow at residues 223–296 (KTPD…NLNE), 569–594 (SLIINSPPNSNNHENEKKRKFRDNGI), and 618–649 (SSSSSSTSSSLTFSPPQQLSSPTSSSSSSTFS). 2 stretches are compositionally biased toward low complexity: residues 229–293 (NPNL…SNEN) and 571–580 (IINSPPNSNN). An F-box domain is found at 717–763 (CSLFDLLPYEMIQYIFTLMDATHLIRMSRTCKYFNRICLDDNIWRDL). The interval 804–841 (KKSNNSSPLSASSSSSSPSPPLLPPPPPPIPQLPDMLL) is disordered. The segment covering 809–820 (SSPLSASSSSSS) has biased composition (low complexity). The span at 821 to 835 (PSPPLLPPPPPPIPQ) shows a compositional bias: pro residues. 7 WD repeats span residues 886–923 (GHKGKISCLQMAPNQIFTGSKDKEFKSWNIATKQCEST), 925–979 (RCGA…IEKE), 981–1017 (RFLYVSNGFIFMKRDIYSYESNTVKLYDSETEQELQM), 1020–1059 (IENTKINHCKIGRFENFCMIACTDKTVKLWDIDSNKTELV), 1062–1100 (GHKGSVNCLDFLNDYQLITGSSDKTIRMWDIRNPSSAIH), 1104–1141 (SHSSKVKAISIYNNLRMCTGDEDSICLWNLEGSNEPNL), and 1146–1178 (NNLSPVECLSIDDETMLAGFSDGEVSYYDFNSK).

Functionally, substrate recognition component of a SCF (SKP1-CUL1-F-box protein) E3 ubiquitin-protein ligase complex which mediates the ubiquitination and subsequent proteasomal degradation of target proteins. The chain is F-box/WD repeat-containing protein A-like protein from Dictyostelium discoideum (Social amoeba).